The following is a 366-amino-acid chain: NADH-quinone oxidoreductase subunit D (366 aa).

The protein belongs to the complex I 49 kDa subunit family. As to quaternary structure, NDH-1 is composed of 14 different subunits. Subunits NuoB, C, D, E, F, and G constitute the peripheral sector of the complex.

It localises to the cell membrane. It carries out the reaction a quinone + NADH + 5 H(+)(in) = a quinol + NAD(+) + 4 H(+)(out). NDH-1 shuttles electrons from NADH, via FMN and iron-sulfur (Fe-S) centers, to quinones in the respiratory chain. The immediate electron acceptor for the enzyme in this species is believed to be a menaquinone. Couples the redox reaction to proton translocation (for every two electrons transferred, four hydrogen ions are translocated across the cytoplasmic membrane), and thus conserves the redox energy in a proton gradient. The protein is NADH-quinone oxidoreductase subunit D of Bacillus cereus (strain ATCC 14579 / DSM 31 / CCUG 7414 / JCM 2152 / NBRC 15305 / NCIMB 9373 / NCTC 2599 / NRRL B-3711).